Reading from the N-terminus, the 399-residue chain is Nicotinate phosphoribosyltransferase 1 (399 aa).

Residue His224 is modified to Phosphohistidine; by autocatalysis.

Belongs to the NAPRTase family. In terms of processing, transiently phosphorylated on a His residue during the reaction cycle. Phosphorylation strongly increases the affinity for substrates and increases the rate of nicotinate D-ribonucleotide production. Dephosphorylation regenerates the low-affinity form of the enzyme, leading to product release.

It carries out the reaction nicotinate + 5-phospho-alpha-D-ribose 1-diphosphate + ATP + H2O = nicotinate beta-D-ribonucleotide + ADP + phosphate + diphosphate. The protein operates within cofactor biosynthesis; NAD(+) biosynthesis; nicotinate D-ribonucleotide from nicotinate: step 1/1. Functionally, catalyzes the synthesis of beta-nicotinate D-ribonucleotide from nicotinate and 5-phospho-D-ribose 1-phosphate at the expense of ATP. The protein is Nicotinate phosphoribosyltransferase 1 of Pseudomonas aeruginosa (strain ATCC 15692 / DSM 22644 / CIP 104116 / JCM 14847 / LMG 12228 / 1C / PRS 101 / PAO1).